A 344-amino-acid chain; its full sequence is Follistatin (344 aa).

Positions 1 to 29 (MARPRHQPGGLCLLLLLLCQFMEDRSAQA) are cleaved as a signal peptide. Residues 30–103 (GNCWLRQAKN…TCENVDCGPG (74 aa)) enclose the TB domain. 8 cysteine pairs are disulfide-bonded: Cys-32–Cys-55, Cys-42–Cys-88, Cys-56–Cys-91, Cys-95–Cys-106, Cys-100–Cys-116, Cys-118–Cys-150, Cys-122–Cys-143, and Cys-132–Cys-164. The region spanning 94–117 (TCENVDCGPGKKCRMNKKNKPRCV) is the Follistatin-like 1 domain. Kazal-like domains follow at residues 112-166 (NKPR…KCKK), 186-241 (NAYC…KCIK), and 261-318 (KVGR…SCNS). Asn-124 carries N-linked (GlcNAc...) asparagine glycosylation. Residues 167-190 (TCRDVFCPGSSTCVVDQTNNAYCV) enclose the Follistatin-like 2 domain. Cystine bridges form between Cys-192–Cys-225, Cys-196–Cys-218, and Cys-207–Cys-239. The region spanning 244 to 268 (SCDDIQCTGGKKCLWDFKVGRGRCS) is the Follistatin-like 3 domain. Intrachain disulfides connect Cys-270–Cys-302, Cys-274–Cys-295, and Cys-284–Cys-316. Asn-288 is a glycosylation site (N-linked (GlcNAc...) asparagine). Residues 316-344 (CNSISEDTEDEEEDEDQDYSFPISSILEW) are disordered. Acidic residues predominate over residues 321 to 333 (EDTEDEEEDEDQD).

As to quaternary structure, interacts with GDF11. Interacts with activin A/INHBA. Interacts with myostatin/MSTN.

It localises to the secreted. The protein resides in the nucleus. It is found in the nucleolus. Functionally, multifunctional regulatory protein whose primary function is to antagonize members of the transforming growth factor beta (TGF-beta) superfamily including activin, myostatin, GDF11 or bone morphogenetic proteins (BMPs). Mechanistically, binds to these ligands in the extracellular space, blocking their type II receptor-binding site to inhibit downstream signaling. Plays an essential role in muscle fiber formation and growth both by preventing the repressive effects of myostatin and through SMAD3/AKT/mTOR signaling independently of myostatin. Also promotes neural differentiation by antagonizing the action BMP4. Acts as a specific inhibitor of the biosynthesis and secretion of pituitary follicle stimulating hormone (FSH) by sequestering activin A/INHBA. On the other hand, translocates into the nucleus where it down-regulates rRNA synthesis and ribosome biogenesis to maintain cellular energy homeostasis by binding to rDNA. In Bos taurus (Bovine), this protein is Follistatin.